A 124-amino-acid chain; its full sequence is MIVGLGVDIVELARIEKSLTRFGRRFAEKVLSPEEMAAMPTLTVNYIAGRFAVKEAAVKALGTGFSQGIGPTLVETVATSGGKPQLRLHGAALQCARDLGVTSCHVSISHDRSSAVAVVVLEAL.

Mg(2+) is bound by residues D8 and E55.

It belongs to the P-Pant transferase superfamily. AcpS family. It depends on Mg(2+) as a cofactor.

It localises to the cytoplasm. The catalysed reaction is apo-[ACP] + CoA = holo-[ACP] + adenosine 3',5'-bisphosphate + H(+). Transfers the 4'-phosphopantetheine moiety from coenzyme A to a Ser of acyl-carrier-protein. The protein is Holo-[acyl-carrier-protein] synthase of Desulfovibrio desulfuricans (strain ATCC 27774 / DSM 6949 / MB).